The sequence spans 140 residues: Low calcium response locus protein T (140 aa).

The protein is Low calcium response locus protein T (lcrT) of Yersinia pseudotuberculosis serotype I (strain IP32953).